Reading from the N-terminus, the 263-residue chain is Small ribosomal subunit protein eS1 (263 aa).

Residues 235-263 (HGEGGGGKGEAGDKSERPEGYEPPVQESV) form a disordered region. Residues 244-254 (EAGDKSERPEG) show a composition bias toward basic and acidic residues.

The protein belongs to the eukaryotic ribosomal protein eS1 family. Component of the small ribosomal subunit. Mature ribosomes consist of a small (40S) and a large (60S) subunit. The 40S subunit contains about 33 different proteins and 1 molecule of RNA (18S). The 60S subunit contains about 49 different proteins and 3 molecules of RNA (28S, 5.8S and 5S).

The protein resides in the cytoplasm. The sequence is that of Small ribosomal subunit protein eS1 from Bombyx mori (Silk moth).